Reading from the N-terminus, the 83-residue chain is Small ribosomal subunit protein bS16 (83 aa).

This sequence belongs to the bacterial ribosomal protein bS16 family.

This chain is Small ribosomal subunit protein bS16, found in Herminiimonas arsenicoxydans.